Consider the following 521-residue polypeptide: Cytochrome P450 monooxygenase ABA2 (521 aa).

Residues 15-35 (AGHLGMAVTFTILVAFTIHVL) traverse the membrane as a helical segment. N-linked (GlcNAc...) asparagine glycosylation occurs at N366. Position 458 (C458) interacts with heme.

It belongs to the cytochrome P450 family. It depends on heme as a cofactor.

The protein resides in the membrane. The protein operates within hormone biosynthesis. Cytochrome P450 monooxygenase involved in the biosynthesis of abscisic acid (ABA), a phytohormone that acts antagonistically toward salicylic acid (SA), jasmonic acid (JA) and ethylene (ETH) signaling, to impede plant defense responses. During pathogen-host interaction, ABA plays a dual role in disease severity by increasing plant susceptibility and accelerating pathogenesis in the fungus itself. The first step of the pathway catalyzes the reaction from farnesyl diphosphate to alpha-ionylideneethane performed by the alpha-ionylideneethane synthase ABA3 via a three-step reaction mechanism involving 2 neutral intermediates, beta-farnesene and allofarnesene. The cytochrome P450 monooxygenase ABA1 might then be involved in the conversion of alpha-ionylideneethane to alpha-ionylideneacetic acid. Alpha-ionylideneacetic acid is further converted to abscisic acid in 2 steps involving the cytochrome P450 monooxygenase ABA2 and the short-chain dehydrogenase/reductase ABA4, via the intermediates 1'-deoxy-ABA or 1',4'-trans-diol-ABA, depending on the order of action of these 2 enzymes. ABA2 is responsible for the hydroxylation of carbon atom C-1' and ABA4 might be involved in the oxidation of the C-4' carbon atom. The polypeptide is Cytochrome P450 monooxygenase ABA2 (Pyricularia oryzae (strain 70-15 / ATCC MYA-4617 / FGSC 8958) (Rice blast fungus)).